Reading from the N-terminus, the 522-residue chain is Nif-specific regulatory protein (522 aa).

The a domain stretch occupies residues 1–184 (MNATIPQRSA…AQTVRLVVNI (184 aa)). The region spanning 37-178 (QIDELLEQVL…IVANLLAQTV (142 aa)) is the GAF domain. In terms of domain architecture, Sigma-54 factor interaction spans 211–439 (VVGHTPTMRR…LENCLERSAI (229 aa)). ATP is bound by residues 239-246 (GESGTGKE) and 302-311 (ADGGTLFLDE). The inter-domain linker stretch occupies residues 440–479 (MSEDGTITRDVVSLTGVDNESPPLAAPLPEVNLADETLDD). Residues 480–522 (RERVIAALEQAGWVQAKAARLLGMTPRQIAYRIQTLNIHMRKI) are C-terminal DNA-binding domain. Positions 494–513 (QAKAARLLGMTPRQIAYRIQ) form a DNA-binding region, H-T-H motif.

Interacts with sigma-54.

Required for activation of most nif operons, which are directly involved in nitrogen fixation. This Azotobacter vinelandii protein is Nif-specific regulatory protein (nifA).